The chain runs to 74 residues: Large ribosomal subunit protein bL27c (74 aa).

This sequence belongs to the bacterial ribosomal protein bL27 family.

Its subcellular location is the plastid. The protein localises to the chloroplast. The polypeptide is Large ribosomal subunit protein bL27c (rpl27) (Calyptrosphaera sphaeroidea).